Here is a 345-residue protein sequence, read N- to C-terminus: S-adenosylmethionine:tRNA ribosyltransferase-isomerase (345 aa).

This sequence belongs to the QueA family. In terms of assembly, monomer.

It localises to the cytoplasm. It catalyses the reaction 7-aminomethyl-7-carbaguanosine(34) in tRNA + S-adenosyl-L-methionine = epoxyqueuosine(34) in tRNA + adenine + L-methionine + 2 H(+). Its pathway is tRNA modification; tRNA-queuosine biosynthesis. Its function is as follows. Transfers and isomerizes the ribose moiety from AdoMet to the 7-aminomethyl group of 7-deazaguanine (preQ1-tRNA) to give epoxyqueuosine (oQ-tRNA). In Helicobacter pylori (strain J99 / ATCC 700824) (Campylobacter pylori J99), this protein is S-adenosylmethionine:tRNA ribosyltransferase-isomerase.